The chain runs to 944 residues: 2-oxoglutarate dehydrogenase E1 component (944 aa).

Positions 914 to 944 (RRRRSSPAEGDPTVHKKEQERIVSDSLTRKN) are disordered. The span at 925-936 (PTVHKKEQERIV) shows a compositional bias: basic and acidic residues.

The protein belongs to the alpha-ketoglutarate dehydrogenase family. As to quaternary structure, homodimer. Part of the 2-oxoglutarate dehydrogenase (OGDH) complex composed of E1 (2-oxoglutarate dehydrogenase), E2 (dihydrolipoamide succinyltransferase) and E3 (dihydrolipoamide dehydrogenase); the complex contains multiple copies of the three enzymatic components (E1, E2 and E3). Thiamine diphosphate serves as cofactor.

It carries out the reaction N(6)-[(R)-lipoyl]-L-lysyl-[protein] + 2-oxoglutarate + H(+) = N(6)-[(R)-S(8)-succinyldihydrolipoyl]-L-lysyl-[protein] + CO2. Its function is as follows. E1 component of the 2-oxoglutarate dehydrogenase (OGDH) complex which catalyzes the decarboxylation of 2-oxoglutarate, the first step in the conversion of 2-oxoglutarate to succinyl-CoA and CO(2). In Bacillus subtilis (strain 168), this protein is 2-oxoglutarate dehydrogenase E1 component.